The following is a 190-amino-acid chain: Large ribosomal subunit protein uL22 (190 aa).

Residues 111 to 190 (SVQSTKAKAK…TKKKTEGEEK (80 aa)) form a disordered region. Residues 125 to 147 (IKSEDSKNSLKVTESKADSKVDA) are compositionally biased toward basic and acidic residues. Residues 167–178 (AKVATTKSTATR) show a composition bias toward low complexity.

This sequence belongs to the universal ribosomal protein uL22 family. In terms of assembly, part of the 50S ribosomal subunit.

In terms of biological role, this protein binds specifically to 23S rRNA; its binding is stimulated by other ribosomal proteins, e.g. L4, L17, and L20. It is important during the early stages of 50S assembly. It makes multiple contacts with different domains of the 23S rRNA in the assembled 50S subunit and ribosome. Its function is as follows. The globular domain of the protein is located near the polypeptide exit tunnel on the outside of the subunit, while an extended beta-hairpin is found that lines the wall of the exit tunnel in the center of the 70S ribosome. This chain is Large ribosomal subunit protein uL22, found in Helicobacter hepaticus (strain ATCC 51449 / 3B1).